We begin with the raw amino-acid sequence, 688 residues long: UvrABC system protein B (688 aa).

Residues 31-414 form the Helicase ATP-binding domain; it reads GRITAGETDV…LGIADGVVEQ (384 aa). 44–51 contacts ATP; the sequence is GATGTGKS. A Beta-hairpin motif is present at residues 97 to 120; sequence YYDYYQPEAYVPQTDTFIEKDSSI. Positions 434–600 constitute a Helicase C-terminal domain; it reads QIDDLLEEIR…PLRKRIADIT (167 aa). Residues 614-633 are disordered; sequence LAGRDQKRKSPTPSLRSGGI. A UVR domain is found at 642-677; it reads ESLIADLNAQMLAAAGELKFELAARLRDELSDLKRD.

Belongs to the UvrB family. Forms a heterotetramer with UvrA during the search for lesions. Interacts with UvrC in an incision complex.

The protein localises to the cytoplasm. Functionally, the UvrABC repair system catalyzes the recognition and processing of DNA lesions. A damage recognition complex composed of 2 UvrA and 2 UvrB subunits scans DNA for abnormalities. Upon binding of the UvrA(2)B(2) complex to a putative damaged site, the DNA wraps around one UvrB monomer. DNA wrap is dependent on ATP binding by UvrB and probably causes local melting of the DNA helix, facilitating insertion of UvrB beta-hairpin between the DNA strands. Then UvrB probes one DNA strand for the presence of a lesion. If a lesion is found the UvrA subunits dissociate and the UvrB-DNA preincision complex is formed. This complex is subsequently bound by UvrC and the second UvrB is released. If no lesion is found, the DNA wraps around the other UvrB subunit that will check the other stand for damage. This is UvrABC system protein B from Leifsonia xyli subsp. xyli (strain CTCB07).